The sequence spans 110 residues: Nucleotide-binding protein in fmt 3'region (110 aa).

An ATP-binding site is contributed by 8-15 (GLSGAGKT). 57 to 60 (DARA) lines the GTP pocket.

Belongs to the RapZ-like family.

Its function is as follows. Displays ATPase and GTPase activities. The polypeptide is Nucleotide-binding protein in fmt 3'region (Thermus thermophilus).